Here is a 229-residue protein sequence, read N- to C-terminus: Elongation factor 1-delta 1 (229 aa).

A disordered region spans residues 80 to 109 (ESTAVPSASTPDVADAKAPAADDDDDDDVD). Residues 100–109 (ADDDDDDDVD) are compositionally biased toward acidic residues.

It belongs to the EF-1-beta/EF-1-delta family. In terms of assembly, EF-1 is composed of 4 subunits: alpha, beta (1B-alpha=beta'), delta (1B-beta), and gamma (1B-gamma).

In terms of biological role, EF-1-beta and EF-1-beta' stimulate the exchange of GDP bound to EF-1-alpha to GTP. The protein is Elongation factor 1-delta 1 of Oryza sativa subsp. japonica (Rice).